The following is a 242-amino-acid chain: Cytochrome c oxidase subunit 2 (242 aa).

At 7–33 (DVPVPYGLYFQDSATPTFDGIIELHDI) the chain is on the mitochondrial intermembrane side. A helical membrane pass occupies residues 34-55 (VMFYIVVTIVLVSYLLFVIIKN). Topologically, residues 56–73 (FSNDHISYKYLTHGTTLE) are mitochondrial matrix. Residues 74 to 98 (IVWTIFPVVILLFIAFPSFILLYLC) traverse the membrane as a helical segment. Residues 99-242 (DEVIDPAMTI…DKFLSWLDEQ (144 aa)) lie on the Mitochondrial intermembrane side of the membrane. Cu cation is bound by residues His-177, Cys-212, Glu-214, Cys-216, His-220, and Met-223. Residue Glu-214 participates in Mg(2+) binding.

The protein belongs to the cytochrome c oxidase subunit 2 family. In terms of assembly, component of the cytochrome c oxidase (complex IV, CIV), a multisubunit enzyme composed of a catalytic core of 3 subunits and several supernumerary subunits. The complex exists as a monomer or a dimer and forms supercomplexes (SCs) in the inner mitochondrial membrane with ubiquinol-cytochrome c oxidoreductase (cytochrome b-c1 complex, complex III, CIII). Cu cation is required as a cofactor. Post-translationally, the signal sequence of COX2 is processed by IMP1.

It localises to the mitochondrion inner membrane. The catalysed reaction is 4 Fe(II)-[cytochrome c] + O2 + 8 H(+)(in) = 4 Fe(III)-[cytochrome c] + 2 H2O + 4 H(+)(out). In terms of biological role, component of the cytochrome c oxidase, the last enzyme in the mitochondrial electron transport chain which drives oxidative phosphorylation. The respiratory chain contains 3 multisubunit complexes succinate dehydrogenase (complex II, CII), ubiquinol-cytochrome c oxidoreductase (cytochrome b-c1 complex, complex III, CIII) and cytochrome c oxidase (complex IV, CIV), that cooperate to transfer electrons derived from NADH and succinate to molecular oxygen, creating an electrochemical gradient over the inner membrane that drives transmembrane transport and the ATP synthase. Cytochrome c oxidase is the component of the respiratory chain that catalyzes the reduction of oxygen to water. Electrons originating from reduced cytochrome c in the intermembrane space (IMS) are transferred via the dinuclear copper A center (CU(A)) of subunit 2 and heme A of subunit 1 to the active site in subunit 1, a binuclear center (BNC) formed by heme A3 and copper B (CU(B)). The BNC reduces molecular oxygen to 2 water molecules using 4 electrons from cytochrome c in the IMS and 4 protons from the mitochondrial matrix. This Yarrowia lipolytica (strain CLIB 122 / E 150) (Yeast) protein is Cytochrome c oxidase subunit 2 (COX2).